The chain runs to 1673 residues: Protein TIC 214 (1673 aa).

6 helical membrane-spanning segments follow: residues 32 to 52, 70 to 90, 93 to 113, 130 to 150, 170 to 190, and 218 to 238; these read AGLY…ILLI, LILG…YIAF, PYTL…GNNL, LEIL…TCIF, MVFL…VLMC, and FFLV…IQSL. Basic and acidic residues-rich tracts occupy residues 264–276 and 283–298; these read LKKS…GKST and SHEK…SKLE. 4 disordered regions span residues 264–302, 547–611, 1120–1146, and 1370–1433; these read LKKS…NEDE, VVFD…YSIR, NKQS…TDNL, and QQNQ…SEDD. Over residues 562–586 the composition is skewed to polar residues; it reads DNGNIQNNSSDKTINPQNNLTNLKP. The segment covering 597-611 has biased composition (basic and acidic residues); that stretch reads TTEKEPKDDKSYSIR. A compositionally biased stretch (polar residues) spans 1120–1135; sequence NKQSLQKRNSSGNSNL. Over residues 1370–1379 the composition is skewed to low complexity; sequence QQNQTTTKMN. Composition is skewed to basic and acidic residues over residues 1380-1399 and 1406-1423; these read TETK…KKTE and TKNK…KETE.

It belongs to the TIC214 family. In terms of assembly, part of the Tic complex.

Its subcellular location is the plastid. The protein resides in the chloroplast inner membrane. In terms of biological role, involved in protein precursor import into chloroplasts. May be part of an intermediate translocation complex acting as a protein-conducting channel at the inner envelope. The polypeptide is Protein TIC 214 (Cuscuta gronovii (Common dodder)).